A 458-amino-acid polypeptide reads, in one-letter code: V-type ATP synthase beta chain (458 aa).

The protein belongs to the ATPase alpha/beta chains family.

Its function is as follows. Produces ATP from ADP in the presence of a proton gradient across the membrane. The V-type beta chain is a regulatory subunit. This Enterococcus faecalis (strain ATCC 700802 / V583) protein is V-type ATP synthase beta chain.